The following is a 71-amino-acid chain: Protein bdm (71 aa).

This Escherichia coli (strain K12) protein is Protein bdm (bdm).